Consider the following 525-residue polypeptide: Light-independent protochlorophyllide reductase subunit B (525 aa).

Residue D36 participates in [4Fe-4S] cluster binding. D274 acts as the Proton donor in catalysis. Position 409–410 (409–410 (GL)) interacts with substrate. Residues 433–464 (HGGKAVAREESPVAPADLAPAATSDTPAAPSP) form a disordered region. Positions 444 to 464 (PVAPADLAPAATSDTPAAPSP) are enriched in low complexity.

The protein belongs to the ChlB/BchB/BchZ family. In terms of assembly, protochlorophyllide reductase is composed of three subunits; BchL, BchN and BchB. Forms a heterotetramer of two BchB and two BchN subunits. It depends on [4Fe-4S] cluster as a cofactor.

It carries out the reaction chlorophyllide a + oxidized 2[4Fe-4S]-[ferredoxin] + 2 ADP + 2 phosphate = protochlorophyllide a + reduced 2[4Fe-4S]-[ferredoxin] + 2 ATP + 2 H2O. It functions in the pathway porphyrin-containing compound metabolism; bacteriochlorophyll biosynthesis (light-independent). Component of the dark-operative protochlorophyllide reductase (DPOR) that uses Mg-ATP and reduced ferredoxin to reduce ring D of protochlorophyllide (Pchlide) to form chlorophyllide a (Chlide). This reaction is light-independent. The NB-protein (BchN-BchB) is the catalytic component of the complex. The protein is Light-independent protochlorophyllide reductase subunit B of Rhodobacter capsulatus (strain ATCC BAA-309 / NBRC 16581 / SB1003).